Here is a 208-residue protein sequence, read N- to C-terminus: Uracil phosphoribosyltransferase (208 aa).

Residues Arg-78, Arg-103, and 130-138 (DPMLATGGS) contribute to the 5-phospho-alpha-D-ribose 1-diphosphate site. Uracil contacts are provided by residues Ile-193 and 198–200 (GDA). Residue Asp-199 participates in 5-phospho-alpha-D-ribose 1-diphosphate binding.

The protein belongs to the UPRTase family. Mg(2+) is required as a cofactor.

It catalyses the reaction UMP + diphosphate = 5-phospho-alpha-D-ribose 1-diphosphate + uracil. Its pathway is pyrimidine metabolism; UMP biosynthesis via salvage pathway; UMP from uracil: step 1/1. Allosterically activated by GTP. Functionally, catalyzes the conversion of uracil and 5-phospho-alpha-D-ribose 1-diphosphate (PRPP) to UMP and diphosphate. The chain is Uracil phosphoribosyltransferase from Shewanella oneidensis (strain ATCC 700550 / JCM 31522 / CIP 106686 / LMG 19005 / NCIMB 14063 / MR-1).